A 261-amino-acid polypeptide reads, in one-letter code: Indole-3-glycerol phosphate synthase (261 aa).

Belongs to the TrpC family.

The enzyme catalyses 1-(2-carboxyphenylamino)-1-deoxy-D-ribulose 5-phosphate + H(+) = (1S,2R)-1-C-(indol-3-yl)glycerol 3-phosphate + CO2 + H2O. The protein operates within amino-acid biosynthesis; L-tryptophan biosynthesis; L-tryptophan from chorismate: step 4/5. The chain is Indole-3-glycerol phosphate synthase from Burkholderia ambifaria (strain ATCC BAA-244 / DSM 16087 / CCUG 44356 / LMG 19182 / AMMD) (Burkholderia cepacia (strain AMMD)).